The chain runs to 620 residues: Glutathione-regulated potassium-efflux system protein KefC (620 aa).

12 consecutive transmembrane segments (helical) span residues 4–24 (HTLIQALIYLGSAALIVPIAV), 26–46 (LGLGSVLGYLIAGCIIGPWGL), 54–74 (SILHFAEIGVVLMLFIIGLEL), 90–110 (GALQMVICGGLLGLFCMLLGL), 114–134 (VAELIGMTLALSSTAIAMQAM), 149–169 (FAVLLFQDIAAIPLVAMIPLL), 178–198 (MGAFALSALKVAGALVLVVLL), 218–238 (VFSAVALFLVFGFGLLLEEVG), 270–290 (GLLLGLFFIGVGMSIDFGTLI), 294–314 (LRIVILLLGFLIIKIAMLWLI), 327–347 (WFAVLLGQGSEFAFVVFGAAQ), and 359–379 (SLTLAVALSMAATPILLVILN). Residues 399 to 518 (QPRVIIAGFG…AGVEKPERET (120 aa)) enclose the RCK N-terminal domain. A disordered region spans residues 597 to 620 (GWQGTEEGKHTGNMADEPETKPSS).

Belongs to the monovalent cation:proton antiporter 2 (CPA2) transporter (TC 2.A.37) family. KefC subfamily. Homodimer. Interacts with the regulatory subunit KefF.

It is found in the cell inner membrane. Its function is as follows. Pore-forming subunit of a potassium efflux system that confers protection against electrophiles. Catalyzes K(+)/H(+) antiport. This Escherichia coli O17:K52:H18 (strain UMN026 / ExPEC) protein is Glutathione-regulated potassium-efflux system protein KefC.